Reading from the N-terminus, the 115-residue chain is Double-headed protease inhibitor, submandibular gland (115 aa).

Kazal-like domains are found at residues 6–66 (IGRE…ACDI) and 67–115 (ECTE…HGEC). Intrachain disulfides connect C12-C46, C24-C43, C32-C64, C68-C97, C75-C94, and C83-C115.

The protein localises to the secreted. This inhibitor is composed of two homologous actively inhibiting halves: one which inhibits trypsin, the other which inhibits elastase. This Canis lupus familiaris (Dog) protein is Double-headed protease inhibitor, submandibular gland.